Consider the following 208-residue polypeptide: Large ribosomal subunit protein uL3 (208 aa).

The disordered stretch occupies residues 134–153 (SKFHREAGSTGQCTSPGRTF).

The protein belongs to the universal ribosomal protein uL3 family. Part of the 50S ribosomal subunit. Forms a cluster with proteins L14 and L19.

One of the primary rRNA binding proteins, it binds directly near the 3'-end of the 23S rRNA, where it nucleates assembly of the 50S subunit. In Treponema pallidum (strain Nichols), this protein is Large ribosomal subunit protein uL3.